The chain runs to 183 residues: Peptide deformylase (183 aa).

Fe cation-binding residues include Cys110 and His153. Glu154 is an active-site residue. His157 is a binding site for Fe cation.

The protein belongs to the polypeptide deformylase family. The cofactor is Fe(2+).

It catalyses the reaction N-terminal N-formyl-L-methionyl-[peptide] + H2O = N-terminal L-methionyl-[peptide] + formate. Its function is as follows. Removes the formyl group from the N-terminal Met of newly synthesized proteins. Requires at least a dipeptide for an efficient rate of reaction. N-terminal L-methionine is a prerequisite for activity but the enzyme has broad specificity at other positions. In Oceanobacillus iheyensis (strain DSM 14371 / CIP 107618 / JCM 11309 / KCTC 3954 / HTE831), this protein is Peptide deformylase.